A 368-amino-acid polypeptide reads, in one-letter code: Peptide chain release factor 2 (368 aa).

Q251 is subject to N5-methylglutamine.

The protein belongs to the prokaryotic/mitochondrial release factor family. In terms of processing, methylated by PrmC. Methylation increases the termination efficiency of RF2.

Its subcellular location is the cytoplasm. Functionally, peptide chain release factor 2 directs the termination of translation in response to the peptide chain termination codons UGA and UAA. The sequence is that of Peptide chain release factor 2 from Wolinella succinogenes (strain ATCC 29543 / DSM 1740 / CCUG 13145 / JCM 31913 / LMG 7466 / NCTC 11488 / FDC 602W) (Vibrio succinogenes).